The sequence spans 388 residues: Acyl-CoA dehydrogenase fadE12 (388 aa).

This sequence belongs to the acyl-CoA dehydrogenase family. FAD serves as cofactor.

It catalyses the reaction a 2,3-saturated acyl-CoA + A = a 2,3-dehydroacyl-CoA + AH2. The polypeptide is Acyl-CoA dehydrogenase fadE12 (fadE12) (Mycobacterium tuberculosis (strain CDC 1551 / Oshkosh)).